A 199-amino-acid polypeptide reads, in one-letter code: Guanylyl cyclase-activating protein 1 (199 aa).

Residue glycine 2 is the site of N-myristoyl glycine attachment. Asparagine 3 carries the deamidated asparagine modification. 4 EF-hand domains span residues 13–48 (SATE…KNLS), 50–85 (SANK…VLKG), 86–121 (KVDQ…IRAI), and 129–164 (TAEE…DEVL). Residues aspartate 63, asparagine 65, aspartate 67, tyrosine 69, glutamate 74, aspartate 99, aspartate 101, asparagine 103, cysteine 105, glutamate 110, aspartate 142, asparagine 144, aspartate 146, glutamate 148, and glutamate 153 each contribute to the Ca(2+) site.

In terms of tissue distribution, retina, in rod and cone outer segments, and pineal gland.

Its function is as follows. Stimulates retinal guanylyl cyclase when free calcium ions concentration is low and inhibits guanylyl cyclase when free calcium ions concentration is elevated. This Ca(2+)-sensitive regulation of retinal guanylyl cyclase is a key event in recovery of the dark state of rod photoreceptors following light exposure. The sequence is that of Guanylyl cyclase-activating protein 1 (GUCA1A) from Gallus gallus (Chicken).